A 174-amino-acid polypeptide reads, in one-letter code: Gamma-crystallin D (174 aa).

Beta/gamma crystallin 'Greek key' domains are found at residues 2–40 (GKITFYEDRGFQGRHYECSTDHSNLQPYFSRCNSVRVDS) and 41–83 (GCWM…RLIP). The interval 84–87 (HAGS) is connecting peptide. 2 consecutive Beta/gamma crystallin 'Greek key' domains span residues 88 to 128 (HRIR…NVLE) and 129 to 171 (GCWV…RRVM).

The protein belongs to the beta/gamma-crystallin family. Detected in the superior olivary complex of the auditory hindbrain.

Its function is as follows. Crystallins are the dominant structural components of the vertebrate eye lens. The sequence is that of Gamma-crystallin D (Crygd) from Mus musculus (Mouse).